A 63-amino-acid polypeptide reads, in one-letter code: Beta-insect depressant toxin Im-3 (63 aa).

The LCN-type CS-alpha/beta domain maps to 1–63; that stretch reads KEGYGVGKDG…KVWESSTNTC (63 aa). Disulfide bonds link cysteine 11-cysteine 63, cysteine 15-cysteine 37, cysteine 22-cysteine 44, and cysteine 26-cysteine 46.

The protein belongs to the long (4 C-C) scorpion toxin superfamily. Sodium channel inhibitor family. Beta subfamily. Expressed by the venom gland.

Its subcellular location is the secreted. In terms of biological role, beta toxins bind voltage-independently at site-4 of sodium channels (Nav) and shift the voltage of activation toward more negative potentials thereby affecting sodium channel activation and promoting spontaneous and repetitive firing. Induces paralysis in cricket A.domestica but does not induce death. The protein is Beta-insect depressant toxin Im-3 of Isometrus maculatus (Lesser brown scorpion).